Here is a 400-residue protein sequence, read N- to C-terminus: Acetylornithine aminotransferase (400 aa).

Pyridoxal 5'-phosphate-binding positions include 113 to 114 (GA) and F139. N(2)-acetyl-L-ornithine is bound at residue R142. A pyridoxal 5'-phosphate-binding site is contributed by 224–227 (DEVQ). K253 bears the N6-(pyridoxal phosphate)lysine mark. S281 is a binding site for N(2)-acetyl-L-ornithine. Pyridoxal 5'-phosphate is bound at residue T282.

The protein belongs to the class-III pyridoxal-phosphate-dependent aminotransferase family. ArgD subfamily. Homodimer. Pyridoxal 5'-phosphate is required as a cofactor.

Its subcellular location is the cytoplasm. It catalyses the reaction N(2)-acetyl-L-ornithine + 2-oxoglutarate = N-acetyl-L-glutamate 5-semialdehyde + L-glutamate. The protein operates within amino-acid biosynthesis; L-arginine biosynthesis; N(2)-acetyl-L-ornithine from L-glutamate: step 4/4. The chain is Acetylornithine aminotransferase from Mycobacterium bovis (strain ATCC BAA-935 / AF2122/97).